Here is a 124-residue protein sequence, read N- to C-terminus: Cytochrome c2 (124 aa).

Pyrrolidone carboxylic acid is present on glutamine 1. 4 residues coordinate heme c: cysteine 15, cysteine 18, histidine 19, and methionine 100.

Binds 1 heme c group covalently per subunit.

Its subcellular location is the periplasm. Cytochrome c2 is found mainly in purple, non-sulfur, photosynthetic bacteria where it functions as the electron donor to the oxidized bacteriochlorophyll in the photophosphorylation pathway. However, it may also have a role in the respiratory chain and is found in some non-photosynthetic bacteria. The protein is Cytochrome c2 (cycA) of Cereibacter sphaeroides (Rhodobacter sphaeroides).